Here is a 207-residue protein sequence, read N- to C-terminus: Large ribosomal subunit protein uL4 (207 aa).

Residues 44 to 58 (RAPTRATRERSDVAR) are compositionally biased toward basic and acidic residues. Residues 44-82 (RAPTRATRERSDVARSGKKFGRQKGGGTARHGDRRSPIF) form a disordered region.

Belongs to the universal ribosomal protein uL4 family. In terms of assembly, part of the 50S ribosomal subunit.

Its function is as follows. One of the primary rRNA binding proteins, this protein initially binds near the 5'-end of the 23S rRNA. It is important during the early stages of 50S assembly. It makes multiple contacts with different domains of the 23S rRNA in the assembled 50S subunit and ribosome. Functionally, forms part of the polypeptide exit tunnel. The protein is Large ribosomal subunit protein uL4 of Zymomonas mobilis subsp. mobilis (strain ATCC 31821 / ZM4 / CP4).